A 36-amino-acid chain; its full sequence is Photosystem II reaction center protein Psb30 (36 aa).

A helical membrane pass occupies residues 8-28 (IIAQLTVVTLTLLAGPVIVFL).

This sequence belongs to the Psb30/Ycf12 family. In terms of assembly, PSII is composed of 1 copy each of membrane proteins PsbA, PsbB, PsbC, PsbD, PsbE, PsbF, PsbH, PsbI, PsbJ, PsbK, PsbL, PsbM, PsbT, PsbX, PsbY, PsbZ, Psb30/Ycf12, peripheral proteins of the oxygen-evolving complex and a large number of cofactors. It forms dimeric complexes.

The protein resides in the plastid. It localises to the cyanelle thylakoid membrane. In terms of biological role, a core subunit of photosystem II (PSII), probably helps stabilize the reaction center. This chain is Photosystem II reaction center protein Psb30, found in Cyanophora paradoxa.